The following is a 1568-amino-acid chain: Plexin-C1 (1568 aa).

The first 34 residues, 1 to 34 (MEVSRRKAPPRPPRPAAPLPLLAYLLALAAPGRG), serve as a signal peptide directing secretion. The Sema domain occupies 35 to 452 (ADEPVWRSEQ…AGKEVRRIRV (418 aa)). Over 35–944 (ADEPVWRSEQ…YVEQESVPST (910 aa)) the chain is Extracellular. C64 and C87 form a disulfide bridge. 3 N-linked (GlcNAc...) asparagine glycosylation sites follow: N86, N141, and N149. Intrachain disulfides connect C156–C194, C226–C354, and C283–C329. N-linked (GlcNAc...) asparagine glycosylation is found at N241 and N252. Residues N386 and N407 are each glycosylated (N-linked (GlcNAc...) asparagine). Cystine bridges form between C455–C472, C461–C506, C464–C481, and C475–C487. 9 N-linked (GlcNAc...) asparagine glycosylation sites follow: N548, N582, N653, N692, N771, N796, N821, N871, and N890. A helical membrane pass occupies residues 945–965 (WYFLIVLPVLLVIVIFAAVGV). At 966 to 1568 (TRHKSKELSR…FDEKKKCKWM (603 aa)) the chain is on the cytoplasmic side. Phosphoserine is present on S978.

This sequence belongs to the plexin family. In terms of assembly, monomer. Homodimer. Interacts with SEMA7A. In terms of processing, N-glycosylated. In terms of tissue distribution, detected in heart, brain, lung, spleen and placenta.

The protein resides in the membrane. Receptor for SEMA7A, for smallpox semaphorin A39R, vaccinia virus semaphorin A39R and for herpesvirus Sema protein. Binding of semaphorins triggers cellular responses leading to the rearrangement of the cytoskeleton and to secretion of IL6 and IL8. In Homo sapiens (Human), this protein is Plexin-C1 (PLXNC1).